Consider the following 695-residue polypeptide: Probable glutamine--tRNA ligase (695 aa).

The short motif at 201–211 (PEPNGILHIGH) is the 'HIGH' region element. ATP contacts are provided by residues 202–204 (EPN) and 208–214 (HIGHAKA). L-glutamine-binding residues include Asp-234 and Tyr-391. Residues Thr-410, 439–440 (RL), and 447–449 (LSK) each bind ATP. The 'KMSKS' region signature appears at 446 to 450 (VLSKR).

Belongs to the class-I aminoacyl-tRNA synthetase family.

The catalysed reaction is tRNA(Gln) + L-glutamine + ATP = L-glutaminyl-tRNA(Gln) + AMP + diphosphate. This Vairimorpha ceranae (strain BRL01) (Microsporidian parasite) protein is Probable glutamine--tRNA ligase.